A 369-amino-acid chain; its full sequence is Tyrosine-protein phosphatase non-receptor type 5 (369 aa).

Ser-49 is subject to Phosphoserine; by PKA. Position 59 is a phosphothreonine; by MAPK (Thr-59). Ser-72 is subject to Phosphoserine; by MAPK. A Tyrosine-protein phosphatase domain is found at 104 to 359; that stretch reads LQAEFFEIPM…QFVHHAMSLY (256 aa). Substrate contacts are provided by residues Asp-265, 300–306, and Gln-344; that span reads CSAGIGR. Cys-300 functions as the Phosphocysteine intermediate in the catalytic mechanism.

The protein belongs to the protein-tyrosine phosphatase family. Non-receptor class subfamily. Phosphorylation at Ser-49 by PKA deactivates PTPN5. Phosphorylation at Thr-59 and Ser-72 by MAPKs stabilizes the phosphatase, dephosphorylation of these sites results in ubiquitin-mediated degradation of the active phosphatase. As to expression, expressed in the central nervous system except in the cerebellum. Enriched within the striatum relative to other brain areas.

Its subcellular location is the cytoplasm. It catalyses the reaction O-phospho-L-tyrosyl-[protein] + H2O = L-tyrosyl-[protein] + phosphate. Functionally, may regulate the activity of several effector molecules involved in synaptic plasticity and neuronal cell survival, including MAPKs, Src family kinases and NMDA receptors. The chain is Tyrosine-protein phosphatase non-receptor type 5 (Ptpn5) from Rattus norvegicus (Rat).